Consider the following 188-residue polypeptide: GMP synthase [glutamine-hydrolyzing] subunit A (188 aa).

In terms of domain architecture, Glutamine amidotransferase type-1 spans Met1 to Leu188. The active-site Nucleophile is the Cys78. Active-site residues include His165 and Glu167.

In terms of assembly, heterodimer composed of a glutamine amidotransferase subunit (A) and a GMP-binding subunit (B).

It carries out the reaction XMP + L-glutamine + ATP + H2O = GMP + L-glutamate + AMP + diphosphate + 2 H(+). It participates in purine metabolism; GMP biosynthesis; GMP from XMP (L-Gln route): step 1/1. Its function is as follows. Catalyzes the synthesis of GMP from XMP. The chain is GMP synthase [glutamine-hydrolyzing] subunit A from Thermococcus kodakarensis (strain ATCC BAA-918 / JCM 12380 / KOD1) (Pyrococcus kodakaraensis (strain KOD1)).